We begin with the raw amino-acid sequence, 106 residues long: Protein Rev (106 aa).

Residues 8 to 16 (LIKFLYQSN) are homomultimerization. Positions 14–39 (QSNPPPKPEGTRQARRNRRRRWRERQ) are disordered. Positions 24 to 40 (TRQARRNRRRRWRERQR) match the Nuclear localization signal and RNA-binding (RRE) motif. The segment covering 26–37 (QARRNRRRRWRE) has biased composition (basic residues). The short motif at 63–74 (LQLPPLERLTLD) is the Nuclear export signal and binding to XPO1 element. Phosphoserine; by host occurs at positions 82 and 89. Residues 82-106 (SGTQGVGSPQILVESPTVLESGTKE) are disordered.

This sequence belongs to the HIV-1 REV protein family. In terms of assembly, homomultimer; when bound to the RRE. Multimeric assembly is essential for activity and may involve XPO1. Binds to human KPNB1, XPO1, TNPO1, RANBP5 and IPO7. Interacts with the viral Integrase. Interacts with human KHDRBS1. Interacts with human NAP1; this interaction decreases Rev multimerization and stimulates its activity. Interacts with human DEAD-box helicases DDX3 and DDX24; these interactions may serve for viral RNA export to the cytoplasm and packaging, respectively. Interacts with human PSIP1; this interaction may inhibit HIV-1 DNA integration by promoting dissociation of the Integrase-LEDGF/p75 complex. Asymmetrically arginine dimethylated at one site by host PRMT6. Methylation impairs the RNA-binding activity and export of viral RNA from the nucleus to the cytoplasm. In terms of processing, phosphorylated by protein kinase CK2. Presence of, and maybe binding to the N-terminus of the regulatory beta subunit of CK2 is necessary for CK2-mediated Rev's phosphorylation.

It localises to the host nucleus. It is found in the host nucleolus. The protein resides in the host cytoplasm. Functionally, escorts unspliced or incompletely spliced viral pre-mRNAs (late transcripts) out of the nucleus of infected cells. These pre-mRNAs carry a recognition sequence called Rev responsive element (RRE) located in the env gene, that is not present in fully spliced viral mRNAs (early transcripts). This function is essential since most viral proteins are translated from unspliced or partially spliced pre-mRNAs which cannot exit the nucleus by the pathway used by fully processed cellular mRNAs. Rev itself is translated from a fully spliced mRNA that readily exits the nucleus. Rev's nuclear localization signal (NLS) binds directly to KPNB1/Importin beta-1 without previous binding to KPNA1/Importin alpha-1. KPNB1 binds to the GDP bound form of RAN (Ran-GDP) and targets Rev to the nucleus. In the nucleus, the conversion from Ran-GDP to Ran-GTP dissociates Rev from KPNB1 and allows Rev's binding to the RRE in viral pre-mRNAs. Rev multimerization on the RRE via cooperative assembly exposes its nuclear export signal (NES) to the surface. Rev can then form a complex with XPO1/CRM1 and Ran-GTP, leading to nuclear export of the complex. Conversion from Ran-GTP to Ran-GDP mediates dissociation of the Rev/RRE/XPO1/RAN complex, so that Rev can return to the nucleus for a subsequent round of export. Beside KPNB1, also seems to interact with TNPO1/Transportin-1, RANBP5/IPO5 and IPO7/RANBP7 for nuclear import. The nucleoporin-like HRB/RIP is an essential cofactor that probably indirectly interacts with Rev to release HIV RNAs from the perinuclear region to the cytoplasm. The chain is Protein Rev from Homo sapiens (Human).